A 69-amino-acid polypeptide reads, in one-letter code: MPKQIHEIKDFLLTARRKDARSVKIKRSKDIVKFKVRCSRYLYTLCVFDQEKADKLKQSLPPGLSVQDL.

The protein belongs to the eukaryotic ribosomal protein eL38 family.

This is Large ribosomal subunit protein eL38z/eL38y (RPL38A) from Arabidopsis thaliana (Mouse-ear cress).